We begin with the raw amino-acid sequence, 150 residues long: Photosystem II extrinsic protein V (150 aa).

Residues methionine 1–alanine 20 form the signal peptide. 4 residues coordinate heme c: cysteine 50, cysteine 53, histidine 54, and histidine 105.

This sequence belongs to the cytochrome c family. PsbV subfamily. PSII is composed of 1 copy each of membrane proteins PsbA, PsbB, PsbC, PsbD, PsbE, PsbF, PsbH, PsbI, PsbJ, PsbK, PsbL, PsbM, PsbT, PsbY, PsbZ, Psb30/Ycf12, at least 3 peripheral proteins of the oxygen-evolving complex and a large number of cofactors. It forms dimeric complexes. The extrinsic subunits in red algae are PsbO (OEC33), PsbQ', cytochrome c-550 and PsbU. Requires heme c as cofactor.

It localises to the plastid. It is found in the chloroplast thylakoid membrane. One of the extrinsic, lumenal subunits of photosystem II (PSII). PSII is a light-driven water plastoquinone oxidoreductase, using light energy to abstract electrons from H(2)O, generating a proton gradient subsequently used for ATP formation. The extrinsic proteins stabilize the structure of photosystem II oxygen-evolving complex (OEC), the ion environment of oxygen evolution and protect the OEC against heat-induced inactivation. This is Photosystem II extrinsic protein V from Cyanidioschyzon merolae (strain NIES-3377 / 10D) (Unicellular red alga).